A 520-amino-acid chain; its full sequence is Sodium-dependent dicarboxylate transporter SdcS (520 aa).

Helical transmembrane passes span 30–50 (AGQL…LLFF), 55–75 (LPWK…WWIT), 77–97 (AIPI…GHIL), 104–124 (SEYG…AIAM), 160–180 (SMFV…LAII), 207–227 (IGYA…PLII), 242–262 (FAKW…ITWL), 298–318 (KVVQ…EFLL), 323–343 (VTSS…LFVI), 362–382 (ELPW…KGIS), 399–419 (GVSP…LTEV), 428–448 (MILP…LLLM), 452–472 (AMAA…AIIF), and 491–511 (LISA…VLGI).

It belongs to the SLC13A/DASS transporter (TC 2.A.47) family. NADC subfamily.

Its subcellular location is the cell membrane. In terms of biological role, mediates the transport of the dicarboxylates fumarate, malate, and succinate across the cytoplasmic membrane via a Na(+)-electrochemical gradient. The protein is Sodium-dependent dicarboxylate transporter SdcS (sdcS) of Staphylococcus aureus (strain MSSA476).